The sequence spans 80 residues: Putative DNA-directed RNA polymerase subunit omega (80 aa).

This sequence belongs to the RNA polymerase subunit omega family.

The protein localises to the plastid. The protein resides in the chloroplast. The catalysed reaction is RNA(n) + a ribonucleoside 5'-triphosphate = RNA(n+1) + diphosphate. May be involved in RNA polymerase activity. In Gracilaria tenuistipitata var. liui (Red alga), this protein is Putative DNA-directed RNA polymerase subunit omega.